The following is a 1165-amino-acid chain: DNA-directed RNA polymerase subunit beta' (1165 aa).

Residues Cys60, Cys62, Cys75, and Cys78 each contribute to the Zn(2+) site. Residues Asp449, Asp451, and Asp453 each coordinate Mg(2+). Zn(2+)-binding residues include Cys794, Cys868, Cys875, and Cys878.

It belongs to the RNA polymerase beta' chain family. The RNAP catalytic core consists of 2 alpha, 1 beta, 1 beta' and 1 omega subunit. When a sigma factor is associated with the core the holoenzyme is formed, which can initiate transcription. The cofactor is Mg(2+). It depends on Zn(2+) as a cofactor.

The enzyme catalyses RNA(n) + a ribonucleoside 5'-triphosphate = RNA(n+1) + diphosphate. DNA-dependent RNA polymerase catalyzes the transcription of DNA into RNA using the four ribonucleoside triphosphates as substrates. This chain is DNA-directed RNA polymerase subunit beta', found in Acetivibrio thermocellus (strain ATCC 27405 / DSM 1237 / JCM 9322 / NBRC 103400 / NCIMB 10682 / NRRL B-4536 / VPI 7372) (Clostridium thermocellum).